The chain runs to 179 residues: Large ribosomal subunit protein uL5 (179 aa).

It belongs to the universal ribosomal protein uL5 family. As to quaternary structure, part of the 50S ribosomal subunit; part of the 5S rRNA/L5/L18/L25 subcomplex. Contacts the 5S rRNA and the P site tRNA. Forms a bridge to the 30S subunit in the 70S ribosome.

This is one of the proteins that bind and probably mediate the attachment of the 5S RNA into the large ribosomal subunit, where it forms part of the central protuberance. In the 70S ribosome it contacts protein S13 of the 30S subunit (bridge B1b), connecting the 2 subunits; this bridge is implicated in subunit movement. Contacts the P site tRNA; the 5S rRNA and some of its associated proteins might help stabilize positioning of ribosome-bound tRNAs. The chain is Large ribosomal subunit protein uL5 from Francisella tularensis subsp. tularensis (strain SCHU S4 / Schu 4).